The sequence spans 194 residues: Pyridoxal 5'-phosphate synthase subunit PdxT (194 aa).

Residue 54–56 (GES) participates in L-glutamine binding. C83 functions as the Nucleophile in the catalytic mechanism. L-glutamine-binding positions include R110 and 139–140 (IR). Residues H175 and E177 each act as charge relay system in the active site.

This sequence belongs to the glutaminase PdxT/SNO family. In terms of assembly, in the presence of PdxS, forms a dodecamer of heterodimers. Only shows activity in the heterodimer.

It catalyses the reaction aldehydo-D-ribose 5-phosphate + D-glyceraldehyde 3-phosphate + L-glutamine = pyridoxal 5'-phosphate + L-glutamate + phosphate + 3 H2O + H(+). The catalysed reaction is L-glutamine + H2O = L-glutamate + NH4(+). It participates in cofactor biosynthesis; pyridoxal 5'-phosphate biosynthesis. Its function is as follows. Catalyzes the hydrolysis of glutamine to glutamate and ammonia as part of the biosynthesis of pyridoxal 5'-phosphate. The resulting ammonia molecule is channeled to the active site of PdxS. The polypeptide is Pyridoxal 5'-phosphate synthase subunit PdxT (Methanoregula boonei (strain DSM 21154 / JCM 14090 / 6A8)).